Here is a 106-residue protein sequence, read N- to C-terminus: Putative protein SH (106 aa).

Residues 48-106 (HSQQNNSGHQFGDRFHSKGHQDTEGRILWKEASTRTTDSTETADTQLVQRQGNGGICLS) are disordered. A compositionally biased stretch (basic and acidic residues) spans 58–80 (FGDRFHSKGHQDTEGRILWKEAS). Over residues 81 to 92 (TRTTDSTETADT) the composition is skewed to low complexity.

In terms of tissue distribution, heart.

Functionally, may be involved with the regulation of GNRH gene expression. It is not known if this protein is transcribed. This chain is Putative protein SH, found in Rattus norvegicus (Rat).